The chain runs to 232 residues: dITP/XTP pyrophosphatase (232 aa).

10 to 15 (TRNKGK) is a substrate binding site. Aspartate 72 functions as the Proton acceptor in the catalytic mechanism. Aspartate 72 provides a ligand contact to Mg(2+). Substrate-binding positions include serine 73, 153 to 156 (FGYD), lysine 176, and 181 to 182 (HR).

This sequence belongs to the HAM1 NTPase family. Homodimer. Mg(2+) serves as cofactor.

The catalysed reaction is XTP + H2O = XMP + diphosphate + H(+). The enzyme catalyses dITP + H2O = dIMP + diphosphate + H(+). It catalyses the reaction ITP + H2O = IMP + diphosphate + H(+). Functionally, pyrophosphatase that catalyzes the hydrolysis of nucleoside triphosphates to their monophosphate derivatives, with a high preference for the non-canonical purine nucleotides XTP (xanthosine triphosphate), dITP (deoxyinosine triphosphate) and ITP. Seems to function as a house-cleaning enzyme that removes non-canonical purine nucleotides from the nucleotide pool, thus preventing their incorporation into DNA/RNA and avoiding chromosomal lesions. The protein is dITP/XTP pyrophosphatase of Syntrophobacter fumaroxidans (strain DSM 10017 / MPOB).